The sequence spans 302 residues: O-antigen biosynthesis glycosyltransferase WbnK (302 aa).

Belongs to the glycosyltransferase 11 family.

The enzyme catalyses beta-D-Gal-(1-&gt;3)-alpha-D-GalNAc-(1-&gt;3)-alpha-D-GalNAc-di-trans,octa-cis-undecaprenyl diphosphate + GDP-beta-L-fucose = alpha-L-Fuc-(1-&gt;2)-beta-D-Gal-(1-&gt;3)-alpha-D-GalNAc-(1-&gt;3)-alpha-D-GalNAc-di-trans,octa-cis-undecaprenyl diphosphate + GDP + H(+). It functions in the pathway bacterial outer membrane biogenesis; LPS O-antigen biosynthesis. Functionally, involved in the assembly of the O-repeating unit during O-antigen biosynthesis. This chain is O-antigen biosynthesis glycosyltransferase WbnK, found in Escherichia coli.